The chain runs to 120 residues: NAD(P)H-quinone oxidoreductase subunit 3 (120 aa).

Helical transmembrane passes span 6-26, 64-84, and 89-109; these read GYDA…LALV, MFAL…PWAV, and LGLL…VALA.

It belongs to the complex I subunit 3 family. In terms of assembly, NDH-1 can be composed of about 15 different subunits; different subcomplexes with different compositions have been identified which probably have different functions.

The protein localises to the cellular thylakoid membrane. It catalyses the reaction a plastoquinone + NADH + (n+1) H(+)(in) = a plastoquinol + NAD(+) + n H(+)(out). It carries out the reaction a plastoquinone + NADPH + (n+1) H(+)(in) = a plastoquinol + NADP(+) + n H(+)(out). In terms of biological role, NDH-1 shuttles electrons from an unknown electron donor, via FMN and iron-sulfur (Fe-S) centers, to quinones in the respiratory and/or the photosynthetic chain. The immediate electron acceptor for the enzyme in this species is believed to be plastoquinone. Couples the redox reaction to proton translocation, and thus conserves the redox energy in a proton gradient. Cyanobacterial NDH-1 also plays a role in inorganic carbon-concentration. In Synechococcus sp. (strain CC9605), this protein is NAD(P)H-quinone oxidoreductase subunit 3.